The sequence spans 515 residues: Fatty acyl-CoA reductase 1 (515 aa).

At 1–465 (MVSIPEYYEG…ARKHLNKLRN (465 aa)) the chain is on the cytoplasmic side. The tract at residues 451 to 507 (SGLPAARKHLNKLRNIRYGFNTILVILIWRIFIARSQMARNIWYFVVSLCYKFLSYF) is necessary and sufficient for PEX19-mediated localization into peroxisome membrane. Residues 466–483 (IRYGFNTILVILIWRIFI) traverse the membrane as a helical segment. Over 484 to 515 (ARSQMARNIWYFVVSLCYKFLSYFRASSTMRY) the chain is Peroxisomal.

The protein belongs to the fatty acyl-CoA reductase family. In terms of assembly, interacts with PEX19; PEX19 mediates the targeting of FAR1 to peroxisomes.

Its subcellular location is the peroxisome membrane. The enzyme catalyses a long-chain fatty acyl-CoA + 2 NADPH + 2 H(+) = a long-chain primary fatty alcohol + 2 NADP(+) + CoA. It catalyses the reaction hexadecanoyl-CoA + 2 NADPH + 2 H(+) = hexadecan-1-ol + 2 NADP(+) + CoA. It carries out the reaction octadecanoyl-CoA + 2 NADPH + 2 H(+) = octadecan-1-ol + 2 NADP(+) + CoA. The catalysed reaction is eicosanoyl-CoA + 2 NADPH + 2 H(+) = eicosan-1-ol + 2 NADP(+) + CoA. The enzyme catalyses (9Z)-octadecenoyl-CoA + 2 NADPH + 2 H(+) = (9Z)-octadecen-1-ol + 2 NADP(+) + CoA. It catalyses the reaction (9Z,12Z)-octadecadienoyl-CoA + 2 NADPH + 2 H(+) = (9Z,12Z)-octadecadien-1-ol + 2 NADP(+) + CoA. It carries out the reaction 16-methylheptadecanoyl-CoA + 2 NADPH + 2 H(+) = 16-methylheptadecan-1-ol + 2 NADP(+) + CoA. The catalysed reaction is 18-methylnonadecanoyl-CoA + 2 NADPH + 2 H(+) = 18-methylnonadecan-1-ol + 2 NADP(+) + CoA. Functionally, catalyzes the reduction of saturated and unsaturated C16 or C18 fatty acyl-CoA to fatty alcohols. It plays an essential role in the production of ether lipids/plasmalogens which synthesis requires fatty alcohols. In parallel, it is also required for wax monoesters production since fatty alcohols also constitute a substrate for their synthesis. The protein is Fatty acyl-CoA reductase 1 of Homo sapiens (Human).